The primary structure comprises 107 residues: uncharacterized protein (107 aa).

This is an uncharacterized protein from Schizosaccharomyces pombe (strain 972 / ATCC 24843) (Fission yeast).